The chain runs to 48 residues: Large ribosomal subunit protein bL33A (48 aa).

Belongs to the bacterial ribosomal protein bL33 family.

This Limosilactobacillus fermentum (strain NBRC 3956 / LMG 18251) (Lactobacillus fermentum) protein is Large ribosomal subunit protein bL33A.